Reading from the N-terminus, the 138-residue chain is Thyrotropin subunit beta (138 aa).

Positions 1-20 are cleaved as a signal peptide; sequence MTATFLMSMIFGLACGQAMS. Intrachain disulfides connect cysteine 22–cysteine 72, cysteine 36–cysteine 87, cysteine 39–cysteine 125, cysteine 47–cysteine 103, cysteine 51–cysteine 105, and cysteine 108–cysteine 115. N-linked (GlcNAc...) asparagine glycosylation is present at asparagine 43. The propeptide occupies 133-138; the sequence is MVGFSI.

It belongs to the glycoprotein hormones subunit beta family. As to quaternary structure, heterodimer of a common alpha chain and a unique beta chain which confers biological specificity to thyrotropin, lutropin, follitropin and gonadotropin.

It is found in the secreted. Indispensable for the control of thyroid structure and metabolism. This is Thyrotropin subunit beta (TSHB) from Bos taurus (Bovine).